A 147-amino-acid chain; its full sequence is Hemoglobin subunit beta (147 aa).

The Globin domain maps to 3-147 (HWTAEEKQLI…VAHALARKYH (145 aa)). Residues His64 and His93 each coordinate heme b.

It belongs to the globin family. Heterotetramer of two alpha chains and two beta chains. In terms of tissue distribution, red blood cells.

In terms of biological role, involved in oxygen transport from the lung to the various peripheral tissues. The protein is Hemoglobin subunit beta (HBB) of Anas platyrhynchos (Mallard).